The following is a 309-amino-acid chain: Olfactory receptor 4B1 (309 aa).

Residues 1 to 23 (MASTSNVTELIFTGLFQDPAVQS) are Extracellular-facing. Asn-6 carries an N-linked (GlcNAc...) asparagine glycan. A helical transmembrane segment spans residues 24–47 (VCFVVFLPVYLATVVGNGLIVLTV). At 48–55 (SISKSLDS) the chain is on the cytoplasmic side. A helical membrane pass occupies residues 56-77 (PMYFFLSCLSLVEISYSSTIAP). Over 78-98 (KFIIDLLAKIKTISLEGCLTQ) the chain is Extracellular. Cys-95 and Cys-187 are oxidised to a cystine. The helical transmembrane segment at 99–118 (IFFFHFFGVAEILLIVVMAY) threads the bilayer. Over 119–137 (DCYVAICKPLHYMNIISRQ) the chain is Cytoplasmic. Residues 138–156 (LCHLLVAGSWLGGFCHSII) form a helical membrane-spanning segment. Residues 157–193 (QILVIIQLPFCGPNVIDHYFCDLQPLFKLACTDTFME) lie on the Extracellular side of the membrane. The helical transmembrane segment at 194 to 217 (GVIVLANSGLFSVFSFLILVSSYI) threads the bilayer. At 218 to 233 (VILVNLRNHSAEGRHK) the chain is on the cytoplasmic side. Residues 234 to 256 (ALSTCASHITVVILFFGPAIFLY) traverse the membrane as a helical segment. Topologically, residues 257 to 267 (MRPSSTFTEDK) are extracellular. The chain crosses the membrane as a helical span at residues 268 to 287 (LVAVFYTVITPMLNPIIYTL). Residues 288–309 (RNAEVKIAIRRLWSKKENPGRE) lie on the Cytoplasmic side of the membrane.

It belongs to the G-protein coupled receptor 1 family.

Its subcellular location is the cell membrane. In terms of biological role, odorant receptor. The protein is Olfactory receptor 4B1 (OR4B1) of Homo sapiens (Human).